A 201-amino-acid polypeptide reads, in one-letter code: MKTASAGPEIERLISLLAKLPGLGPRSARRAALNLLGKKDALMRPLAEALADAADKIRACSECGNMDVSDPCTVCAAPNRLDAAICVVETVGDLWALERAGAFKGRYHVLGGVLSALDGVRPEDLNITKLVERSAREEVSEIVLALNATVDGQTTAHYLADRMAGCNVSITSLARGVPVGGELDYLDDGTLAAAFRSRSTV.

Residues 60 to 75 form a C4-type zinc finger; the sequence is CSECGNMDVSDPCTVC. The Toprim domain maps to 83–178; that stretch reads AAICVVETVG…SITSLARGVP (96 aa).

This sequence belongs to the RecR family.

Its function is as follows. May play a role in DNA repair. It seems to be involved in an RecBC-independent recombinational process of DNA repair. It may act with RecF and RecO. This chain is Recombination protein RecR, found in Maricaulis maris (strain MCS10) (Caulobacter maris).